Consider the following 134-residue polypeptide: Small ribosomal subunit protein uS9c (134 aa).

Belongs to the universal ribosomal protein uS9 family.

The protein resides in the plastid. It localises to the chloroplast. The sequence is that of Small ribosomal subunit protein uS9c (rps9) from Euglena gracilis.